Here is a 439-residue protein sequence, read N- to C-terminus: DNA 3'-5' translocase XPB2 (439 aa).

Positions 1–54 are DRD domain; it reads MVYLRYFKGLILSDAYAPGLKWSDELKAYSALAFKYRDVRKYFLEKEIEVEENV. A Helicase ATP-binding domain is found at 77–221; the sequence is VKAWLKEKRG…LYPILVGPIV (145 aa). Residues 90-97 and Arg-127 contribute to the ATP site; that span reads LPTGAGKT. The DEAH box motif lies at 174-177; it reads DEVH. Positions 205–207 match the RED motif motif; it reads RDD. Residues 227-234 are flexible hinge region; the sequence is EELAGKYI. Residues 248-307 form a thM region region; it reads NEEKKRYDGLRKKLKDFLSSRGLKLQNLDDFHRLVKLAAKDKEAREALLAWHESLNIAVN. A Helicase C-terminal domain is found at 311–439; sequence KIEKLREILQ…DYRLSRRRRE (129 aa).

This sequence belongs to the helicase family. RAD25/XPB subfamily. In terms of assembly, forms a heterodimer with Bax1.

It catalyses the reaction Couples ATP hydrolysis with the unwinding of duplex DNA by translocating in the 3'-5' direction.. The enzyme catalyses ATP + H2O = ADP + phosphate + H(+). Its function is as follows. ATP-dependent DNA translocase which moves along double-stranded DNA (dsDNA) in a 3'-5' direction, unwinding the DNA. The ThM domain grips the resulting 3'-ssDNA tail and functions as a wedge (particularly Phe-278), breaking dsDNA base pairs, probably using the energy from ATP hydrolysis to move along dsDNA. A DNA-dependent ATPase; double-stranded DNA (dsDNA) stimulates the activity more than single-stranded DNA (ssDNA), while Bax1 stimulates ATPase more. In an in vitro assay had no detectable helicase activity. Binds ssDNA better than dsDNA. Has very low ATPase activity that is stimulated by Bax1; dsDNA, Y-form DNA and a DNA substrate with a 6 base pair (bp) bubble in the center stimulate the XPB2-Bax1 ATPase activity about 10- 20-fold more than the absence of DNA. In an XPB2-Bax1-bubble DNA crystal (12 bp of dsDNA, a 6 base bubble and 6 bp of dsDNA) the short 6 bp arm is unwound. The 2 helicase and the ThM domains of XPB2 with the NTD and CRD domains of Bax1 encircle the DNA, forming a tunnel where the 12 bp dsDNA and the ds-ssDNA junction are located. The ThM domain is wedged between the ssDNA tails, with the 5' ssDNA contacting Bax1 and the 3' ssDNA in a channel in XPB2. Bax1 increases the affinity of XPB2 for forked DNA. This chain is DNA 3'-5' translocase XPB2, found in Sulfurisphaera tokodaii (strain DSM 16993 / JCM 10545 / NBRC 100140 / 7) (Sulfolobus tokodaii).